The chain runs to 198 residues: FMN-dependent NADH:quinone oxidoreductase (198 aa).

96 to 99 (MYNF) contacts FMN.

This sequence belongs to the azoreductase type 1 family. As to quaternary structure, homodimer. FMN is required as a cofactor.

It catalyses the reaction 2 a quinone + NADH + H(+) = 2 a 1,4-benzosemiquinone + NAD(+). The enzyme catalyses N,N-dimethyl-1,4-phenylenediamine + anthranilate + 2 NAD(+) = 2-(4-dimethylaminophenyl)diazenylbenzoate + 2 NADH + 2 H(+). In terms of biological role, quinone reductase that provides resistance to thiol-specific stress caused by electrophilic quinones. Functionally, also exhibits azoreductase activity. Catalyzes the reductive cleavage of the azo bond in aromatic azo compounds to the corresponding amines. The chain is FMN-dependent NADH:quinone oxidoreductase from Burkholderia mallei (strain ATCC 23344).